Here is a 2684-residue protein sequence, read N- to C-terminus: Probable polyketide synthase 27 (2684 aa).

A Ketosynthase family 3 (KS3) domain is found at 11–442; it reads CGDVAIIGIG…GSNVCLILSE (432 aa). Residues Cys183, His322, and His365 each act as for beta-ketoacyl synthase activity in the active site. Positions 650–683 are acyl/malonyl transferases; sequence GVSADIIVGHSLGEMSSSYSSGMIDFETLCYLIY. Ser660 serves as the catalytic For acyl/malonyl transferase activity. Residues 958-1087 are N-terminal hotdog fold; it reads HEKITSEGPP…GNFSLFKHNS (130 aa). The 319-residue stretch at 958–1276 folds into the PKS/mFAS DH domain; the sequence is HEKITSEGPP…CTSVSLVNPR (319 aa). His999 serves as the catalytic Proton acceptor; for dehydratase activity. Residues 1104-1276 form a C-terminal hotdog fold region; that stretch reads NFTTISKQEF…CTSVSLVNPR (173 aa). Catalysis depends on Asp1173, which acts as the Proton donor; for dehydratase activity. The segment at 1202–1221 is disordered; the sequence is IPSSSSSSKDDNDCDSNNNN. Residues 2585-2662 form the Carrier domain; the sequence is SDNEFIHSTI…QSIDIIKFGY (78 aa). An O-(pantetheine 4'-phosphoryl)serine modification is found at Ser2622.

The cofactor is pantetheine 4'-phosphate.

In terms of biological role, probable polyketide synthase. This is Probable polyketide synthase 27 (pks27) from Dictyostelium discoideum (Social amoeba).